The following is a 182-amino-acid chain: Vomeronasal secretory protein 1 (182 aa).

The signal sequence occupies residues 1–18 (MRALLLIISFCLVAVLQA). N30 carries N-linked (GlcNAc...) asparagine glycosylation. C76 and C168 form a disulfide bridge.

Belongs to the calycin superfamily. Lipocalin family. In terms of tissue distribution, specifically expressed in vomeronasal and posterior glands of the nasal septum, the ducts of which open into the lumen of the vomeronasal organ.

Its subcellular location is the secreted. Functionally, transport of lipophilic molecules, possible pheromone-carrier. In Mus musculus (Mouse), this protein is Vomeronasal secretory protein 1 (Lcn3).